Reading from the N-terminus, the 226-residue chain is ATP-dependent dethiobiotin synthetase BioD (226 aa).

ATP is bound at residue 14–19 (GIGKTF). Thr18 is a binding site for Mg(2+). Residue Lys39 is part of the active site. Residue Ser43 coordinates substrate. ATP contacts are provided by residues Asp56, 117–120 (EGVG), 177–178 (NT), 206–208 (PHI), and Asn213. Residues Asp56 and Glu117 each coordinate Mg(2+).

This sequence belongs to the dethiobiotin synthetase family. Homodimer. The cofactor is Mg(2+).

Its subcellular location is the cytoplasm. The catalysed reaction is (7R,8S)-7,8-diammoniononanoate + CO2 + ATP = (4R,5S)-dethiobiotin + ADP + phosphate + 3 H(+). Its pathway is cofactor biosynthesis; biotin biosynthesis; biotin from 7,8-diaminononanoate: step 1/2. In terms of biological role, catalyzes a mechanistically unusual reaction, the ATP-dependent insertion of CO2 between the N7 and N8 nitrogen atoms of 7,8-diaminopelargonic acid (DAPA, also called 7,8-diammoniononanoate) to form a ureido ring. This is ATP-dependent dethiobiotin synthetase BioD from Xylella fastidiosa (strain Temecula1 / ATCC 700964).